We begin with the raw amino-acid sequence, 76 residues long: Small ribosomal subunit protein bS18 (76 aa).

It belongs to the bacterial ribosomal protein bS18 family. As to quaternary structure, part of the 30S ribosomal subunit. Forms a tight heterodimer with protein bS6.

In terms of biological role, binds as a heterodimer with protein bS6 to the central domain of the 16S rRNA, where it helps stabilize the platform of the 30S subunit. This chain is Small ribosomal subunit protein bS18, found in Xylella fastidiosa (strain M23).